The primary structure comprises 282 residues: Bifunctional protein FolD (282 aa).

Residues 164–166 (GRS) and Ser189 each bind NADP(+).

This sequence belongs to the tetrahydrofolate dehydrogenase/cyclohydrolase family. As to quaternary structure, homodimer.

The enzyme catalyses (6R)-5,10-methylene-5,6,7,8-tetrahydrofolate + NADP(+) = (6R)-5,10-methenyltetrahydrofolate + NADPH. The catalysed reaction is (6R)-5,10-methenyltetrahydrofolate + H2O = (6R)-10-formyltetrahydrofolate + H(+). It functions in the pathway one-carbon metabolism; tetrahydrofolate interconversion. Functionally, catalyzes the oxidation of 5,10-methylenetetrahydrofolate to 5,10-methenyltetrahydrofolate and then the hydrolysis of 5,10-methenyltetrahydrofolate to 10-formyltetrahydrofolate. The protein is Bifunctional protein FolD of Streptococcus suis (strain 05ZYH33).